Reading from the N-terminus, the 303-residue chain is Probable 5-dehydro-4-deoxyglucarate dehydratase (303 aa).

It belongs to the DapA family.

It carries out the reaction 5-dehydro-4-deoxy-D-glucarate + H(+) = 2,5-dioxopentanoate + CO2 + H2O. It functions in the pathway carbohydrate acid metabolism; D-glucarate degradation; 2,5-dioxopentanoate from D-glucarate: step 2/2. The chain is Probable 5-dehydro-4-deoxyglucarate dehydratase from Acinetobacter baumannii (strain ATCC 17978 / DSM 105126 / CIP 53.77 / LMG 1025 / NCDC KC755 / 5377).